The primary structure comprises 80 residues: Putative UPF0377 protein YMR324C (80 aa).

A helical membrane pass occupies residues 13-33 (ACIFIDSVCEGIVFWGLCLFV).

The protein belongs to the UPF0377 family.

It localises to the membrane. In Saccharomyces cerevisiae (strain ATCC 204508 / S288c) (Baker's yeast), this protein is Putative UPF0377 protein YMR324C.